A 360-amino-acid chain; its full sequence is Dihydroorotate dehydrogenase (quinone) (360 aa).

Residues 60–64 (AGFDK) and T84 each bind FMN. Residue K64 participates in substrate binding. 109–113 (NRMGF) contributes to the substrate binding site. 2 residues coordinate FMN: N137 and N168. N168 contacts substrate. S171 serves as the catalytic Nucleophile. N173 contributes to the substrate binding site. The FMN site is built by K213 and S241. 242-243 (NT) is a substrate binding site. FMN is bound by residues G264, G293, and 314–315 (YS).

Belongs to the dihydroorotate dehydrogenase family. Type 2 subfamily. In terms of assembly, monomer. Requires FMN as cofactor.

The protein localises to the cell membrane. It catalyses the reaction (S)-dihydroorotate + a quinone = orotate + a quinol. It functions in the pathway pyrimidine metabolism; UMP biosynthesis via de novo pathway; orotate from (S)-dihydroorotate (quinone route): step 1/1. Catalyzes the conversion of dihydroorotate to orotate with quinone as electron acceptor. The protein is Dihydroorotate dehydrogenase (quinone) of Bartonella tribocorum (strain CIP 105476 / IBS 506).